The chain runs to 185 residues: Ribosome-recycling factor (185 aa).

The protein belongs to the RRF family.

Its subcellular location is the cytoplasm. Functionally, responsible for the release of ribosomes from messenger RNA at the termination of protein biosynthesis. May increase the efficiency of translation by recycling ribosomes from one round of translation to another. This is Ribosome-recycling factor from Corynebacterium urealyticum (strain ATCC 43042 / DSM 7109).